Here is a 594-residue protein sequence, read N- to C-terminus: UvrABC system protein C (594 aa).

A GIY-YIG domain is found at 14-91 (DQPGCYLMKD…IKKYDPKYNI (78 aa)). A UVR domain is found at 196–231 (KEIRSELETKMYEASEKLEFERAKELRDQIAHIDAI).

This sequence belongs to the UvrC family. In terms of assembly, interacts with UvrB in an incision complex.

It localises to the cytoplasm. Its function is as follows. The UvrABC repair system catalyzes the recognition and processing of DNA lesions. UvrC both incises the 5' and 3' sides of the lesion. The N-terminal half is responsible for the 3' incision and the C-terminal half is responsible for the 5' incision. This Bacillus mycoides (strain KBAB4) (Bacillus weihenstephanensis) protein is UvrABC system protein C.